The following is a 377-amino-acid chain: Prostaglandin E synthase 2 (377 aa).

Residues 1-65 (MAAACTRTLG…LAAPVRGSGR (65 aa)) are Lumenal-facing. The chain crosses the membrane as a helical span at residues 66–83 (VLGCAFLLGGGFGLYQTI). One can recognise a GST N-terminal domain in the interval 105–182 (LKLTLYQYKT…ALKTYISSKD (78 aa)). Glutathione-binding positions include valine 153 and 166–167 (DS). Residues 266–377 (YIVREGKFGS…RMQKATQHVS (112 aa)) form the GST C-terminal domain.

Belongs to the GST superfamily. As to quaternary structure, homodimer.

Its subcellular location is the golgi apparatus membrane. It carries out the reaction prostaglandin H2 = prostaglandin E2. It catalyses the reaction prostaglandin H2 = (12S)-hydroxy-(5Z,8E,10E)-heptadecatrienoate + malonaldehyde. The protein operates within lipid metabolism; prostaglandin biosynthesis. With respect to regulation, isomerase activity is increased by sulfhydril compounds. Dithiothreitol (DTT) is most effective, followed by glutathione (GSH) and 2-mercaptoethanol. Isomerase that catalyzes the conversion of PGH2 into the more stable prostaglandin E2 (PGE2) (in vitro). The biological function and the GSH-dependent property of PTGES2 is still under debate. In vivo, PTGES2 could form a complex with GSH and heme and would not participate in PGE2 synthesis but would catalyze the degradation of prostaglandin E2 H2 (PGH2) to 12(S)-hydroxy-5(Z),8(E),10(E)-heptadecatrienoic acid (HHT) and malondialdehyde (MDA). This Danio rerio (Zebrafish) protein is Prostaglandin E synthase 2 (ptges2).